The following is a 448-amino-acid chain: tRNA-2-methylthio-N(6)-dimethylallyladenosine synthase (448 aa).

An MTTase N-terminal domain is found at 2-119 (KKLYIKTFGC…LSDLIAKRRE (118 aa)). [4Fe-4S] cluster is bound by residues C11, C48, C82, C156, C160, and C163. The region spanning 142–377 (RQTRGSAYVS…LVESQANQIS (236 aa)) is the Radical SAM core domain. Residues 378 to 444 (QKMLGNIERV…NYTLRGKLVE (67 aa)) form the TRAM domain.

Belongs to the methylthiotransferase family. MiaB subfamily. In terms of assembly, monomer. [4Fe-4S] cluster serves as cofactor.

The protein localises to the cytoplasm. The enzyme catalyses N(6)-dimethylallyladenosine(37) in tRNA + (sulfur carrier)-SH + AH2 + 2 S-adenosyl-L-methionine = 2-methylsulfanyl-N(6)-dimethylallyladenosine(37) in tRNA + (sulfur carrier)-H + 5'-deoxyadenosine + L-methionine + A + S-adenosyl-L-homocysteine + 2 H(+). Catalyzes the methylthiolation of N6-(dimethylallyl)adenosine (i(6)A), leading to the formation of 2-methylthio-N6-(dimethylallyl)adenosine (ms(2)i(6)A) at position 37 in tRNAs that read codons beginning with uridine. The sequence is that of tRNA-2-methylthio-N(6)-dimethylallyladenosine synthase from Polynucleobacter necessarius subsp. necessarius (strain STIR1).